Here is a 144-residue protein sequence, read N- to C-terminus: Transcription antitermination protein NusB (144 aa).

This sequence belongs to the NusB family.

Involved in transcription antitermination. Required for transcription of ribosomal RNA (rRNA) genes. Binds specifically to the boxA antiterminator sequence of the ribosomal RNA (rrn) operons. The sequence is that of Transcription antitermination protein NusB from Blochmanniella pennsylvanica (strain BPEN).